We begin with the raw amino-acid sequence, 200 residues long: MNDNNNEIDQLIYLFSKLPGLGSRSARRIVLYLLQDKDVRLKTLINNLTEIDKKIVKCQVCGNMDTENICGICTSEYRDKSVIAIVETVAELWAMERSGNFKGLYHVLGHNLSAASRQNPSILRLPELLDRCFKENIKEVIIATNSTLEGQTTAYFITEYLKDHPAKISRLASGIPIGGELDYLDEGTLSAAINLRQPFE.

A C4-type zinc finger spans residues 58–73; that stretch reads CQVCGNMDTENICGIC. The Toprim domain occupies 81–176; the sequence is SVIAIVETVA…KISRLASGIP (96 aa).

Belongs to the RecR family.

Functionally, may play a role in DNA repair. It seems to be involved in an RecBC-independent recombinational process of DNA repair. It may act with RecF and RecO. The protein is Recombination protein RecR of Rickettsia bellii (strain OSU 85-389).